Reading from the N-terminus, the 96-residue chain is Co-chaperonin GroES (96 aa).

The protein belongs to the GroES chaperonin family. As to quaternary structure, heptamer of 7 subunits arranged in a ring. Interacts with the chaperonin GroEL.

It localises to the cytoplasm. Together with the chaperonin GroEL, plays an essential role in assisting protein folding. The GroEL-GroES system forms a nano-cage that allows encapsulation of the non-native substrate proteins and provides a physical environment optimized to promote and accelerate protein folding. GroES binds to the apical surface of the GroEL ring, thereby capping the opening of the GroEL channel. This is Co-chaperonin GroES from Wolbachia sp. subsp. Brugia malayi (strain TRS).